The following is a 396-amino-acid chain: Elongation factor Tu (396 aa).

The tr-type G domain maps to 10–206; sequence KPHVNVGTIG…AMDEYIPTPE (197 aa). A G1 region spans residues 19–26; it reads GHVDHGKT. 19-26 contributes to the GTP binding site; that stretch reads GHVDHGKT. T26 contributes to the Mg(2+) binding site. Residues 60-64 are G2; that stretch reads GITIA. Positions 81 to 84 are G3; that stretch reads DCPG. GTP-binding positions include 81–85 and 136–139; these read DCPGH and NKAD. Residues 136–139 form a G4 region; it reads NKAD. Residues 174 to 176 form a G5 region; it reads SAL.

It belongs to the TRAFAC class translation factor GTPase superfamily. Classic translation factor GTPase family. EF-Tu/EF-1A subfamily. In terms of assembly, monomer.

The protein localises to the cytoplasm. The catalysed reaction is GTP + H2O = GDP + phosphate + H(+). Functionally, GTP hydrolase that promotes the GTP-dependent binding of aminoacyl-tRNA to the A-site of ribosomes during protein biosynthesis. In Alkalilimnicola ehrlichii (strain ATCC BAA-1101 / DSM 17681 / MLHE-1), this protein is Elongation factor Tu.